A 351-amino-acid polypeptide reads, in one-letter code: Photosystem II D2 protein (351 aa).

The chain crosses the membrane as a helical span at residues 39-59 (CAFLALGGWLTGTTFVTSWYT). Residue H116 participates in chlorophyll a binding. A helical transmembrane segment spans residues 123–139 (GFMLRQFEIARLVGIRP). Pheophytin a is bound by residues Q128 and N141. A helical membrane pass occupies residues 151 to 164 (VFVSVFLMYPLGQS). Residue H196 participates in chlorophyll a binding. The chain crosses the membrane as a helical span at residues 206-226 (GALLCAIHGATVENTLFEDGE). A plastoquinone contacts are provided by H213 and F260. A Fe cation-binding site is contributed by H213. H267 is a Fe cation binding site. Residues 277-293 (GLWMSAVGIVGLALNLR) traverse the membrane as a helical segment.

It belongs to the reaction center PufL/M/PsbA/D family. PSII is composed of 1 copy each of membrane proteins PsbA, PsbB, PsbC, PsbD, PsbE, PsbF, PsbH, PsbI, PsbJ, PsbK, PsbL, PsbM, PsbT, PsbX, PsbY, PsbZ, Psb30/Ycf12, peripheral proteins PsbO, CyanoQ (PsbQ), PsbU, PsbV and a large number of cofactors. It forms dimeric complexes. Requires The D1/D2 heterodimer binds P680, chlorophylls that are the primary electron donor of PSII, and subsequent electron acceptors. It shares a non-heme iron and each subunit binds pheophytin, quinone, additional chlorophylls, carotenoids and lipids. There is also a Cl(-1) ion associated with D1 and D2, which is required for oxygen evolution. The PSII complex binds additional chlorophylls, carotenoids and specific lipids. as cofactor.

It is found in the cellular thylakoid membrane. The catalysed reaction is 2 a plastoquinone + 4 hnu + 2 H2O = 2 a plastoquinol + O2. In terms of biological role, photosystem II (PSII) is a light-driven water:plastoquinone oxidoreductase that uses light energy to abstract electrons from H(2)O, generating O(2) and a proton gradient subsequently used for ATP formation. It consists of a core antenna complex that captures photons, and an electron transfer chain that converts photonic excitation into a charge separation. The D1/D2 (PsbA/PsbD) reaction center heterodimer binds P680, the primary electron donor of PSII as well as several subsequent electron acceptors. D2 is needed for assembly of a stable PSII complex. The sequence is that of Photosystem II D2 protein from Nostoc sp. (strain PCC 7120 / SAG 25.82 / UTEX 2576).